The primary structure comprises 74 residues: Large ribosomal subunit protein uL14c (74 aa).

This sequence belongs to the universal ribosomal protein uL14 family. Part of the 50S ribosomal subunit.

It is found in the plastid. The protein localises to the chloroplast. In terms of biological role, binds to 23S rRNA. The sequence is that of Large ribosomal subunit protein uL14c (rpl14) from Oenothera ammophila (Evening primerose).